The primary structure comprises 100 residues: Large ribosomal subunit protein uL23 (100 aa).

It belongs to the universal ribosomal protein uL23 family. Part of the 50S ribosomal subunit. Contacts protein L29, and trigger factor when it is bound to the ribosome.

One of the early assembly proteins it binds 23S rRNA. One of the proteins that surrounds the polypeptide exit tunnel on the outside of the ribosome. Forms the main docking site for trigger factor binding to the ribosome. The polypeptide is Large ribosomal subunit protein uL23 (Photorhabdus laumondii subsp. laumondii (strain DSM 15139 / CIP 105565 / TT01) (Photorhabdus luminescens subsp. laumondii)).